Reading from the N-terminus, the 240-residue chain is Probable metal transport system ATP-binding protein TM_0124 (240 aa).

The ABC transporter domain occupies 4-223 (VEVKNLTYRI…LKKIFTDFDI (220 aa)). Position 36–43 (36–43 (GPNGAGKT)) interacts with ATP.

The protein belongs to the ABC transporter superfamily.

Functionally, part of an ATP-driven transport system TM_0123/TM_0124/TM_0125 for a metal. Probably responsible for energy coupling to the transport system. The polypeptide is Probable metal transport system ATP-binding protein TM_0124 (Thermotoga maritima (strain ATCC 43589 / DSM 3109 / JCM 10099 / NBRC 100826 / MSB8)).